The sequence spans 274 residues: MTEFTTLLQQGNAWFFIPSAILLGALHGLEPGHSKTMMAAFIIAIKGTIKQAVMLGLAATISHTAVVWLIAFGGMVISKRFTAQSAEPWLQLISAVIIISTAFWMFWRTWRGERNWLENMHEHDHEHHHHDHEDHHDHGHHHHHEHGEYQDAHARAHANDIKRRFDGREVTNWQILLFGLTGGLIPCPAAITVLLICIQLKALTLGATLVVSFSLGLALTLVTVSVGAAISVQQVAKRWSGFNTLAKRAPYFSSLLIGLVGVYMGVHGFMGIMR.

Topologically, residues 1–12 (MTEFTTLLQQGN) are periplasmic. The helical transmembrane segment at 13–33 (AWFFIPSAILLGALHGLEPGH) threads the bilayer. Residues 34–56 (SKTMMAAFIIAIKGTIKQAVMLG) lie on the Cytoplasmic side of the membrane. A helical transmembrane segment spans residues 57-77 (LAATISHTAVVWLIAFGGMVI). The Periplasmic portion of the chain corresponds to 78–86 (SKRFTAQSA). A helical membrane pass occupies residues 87-107 (EPWLQLISAVIIISTAFWMFW). Over 108–174 (RTWRGERNWL…FDGREVTNWQ (67 aa)) the chain is Cytoplasmic. Positions 127–137 (HHHHDHEDHHD) are enriched in basic and acidic residues. Residues 127 to 153 (HHHHDHEDHHDHGHHHHHEHGEYQDAH) form a disordered region. The chain crosses the membrane as a helical span at residues 175–195 (ILLFGLTGGLIPCPAAITVLL). At 196–209 (ICIQLKALTLGATL) the chain is on the periplasmic side. Residues 210-230 (VVSFSLGLALTLVTVSVGAAI) traverse the membrane as a helical segment. At 231–251 (SVQQVAKRWSGFNTLAKRAPY) the chain is on the cytoplasmic side. The chain crosses the membrane as a helical span at residues 252 to 272 (FSSLLIGLVGVYMGVHGFMGI). Residues 273 to 274 (MR) are Periplasmic-facing.

The protein belongs to the NiCoT transporter (TC 2.A.52) family. RcnA subfamily.

It is found in the cell inner membrane. Efflux system for nickel and cobalt. This chain is Nickel/cobalt efflux system RcnA (rcnA), found in Escherichia coli O6:K15:H31 (strain 536 / UPEC).